The following is a 316-amino-acid chain: UDP-3-O-acylglucosamine N-acyltransferase 2 (316 aa).

His230 serves as the catalytic Proton acceptor.

The protein belongs to the transferase hexapeptide repeat family. LpxD subfamily. Homotrimer.

It catalyses the reaction a UDP-3-O-[(3R)-3-hydroxyacyl]-alpha-D-glucosamine + a (3R)-hydroxyacyl-[ACP] = a UDP-2-N,3-O-bis[(3R)-3-hydroxyacyl]-alpha-D-glucosamine + holo-[ACP] + H(+). It participates in bacterial outer membrane biogenesis; LPS lipid A biosynthesis. Functionally, catalyzes the N-acylation of UDP-3-O-acylglucosamine using 3-hydroxyacyl-ACP as the acyl donor. Is involved in the biosynthesis of lipid A, a phosphorylated glycolipid that anchors the lipopolysaccharide to the outer membrane of the cell. In Sulfurimonas denitrificans (strain ATCC 33889 / DSM 1251) (Thiomicrospira denitrificans (strain ATCC 33889 / DSM 1251)), this protein is UDP-3-O-acylglucosamine N-acyltransferase 2.